The primary structure comprises 150 residues: Large ribosomal subunit protein uL13 (150 aa).

It belongs to the universal ribosomal protein uL13 family. Part of the 50S ribosomal subunit.

This protein is one of the early assembly proteins of the 50S ribosomal subunit, although it is not seen to bind rRNA by itself. It is important during the early stages of 50S assembly. In Persephonella marina (strain DSM 14350 / EX-H1), this protein is Large ribosomal subunit protein uL13.